The chain runs to 441 residues: Putative transporter AmpG 1 (441 aa).

A run of 12 helical transmembrane segments spans residues 5-25 (SHLLIIWLFGLISGFNLMITG), 42-62 (IGILSFITLPYSINFLLAPIF), 78-98 (LSWICLTSTALIFLIYIFSFL), 104-124 (LVLFTFTALIISFFSAAQDTI), 143-163 (GIYIFGYRIGMLLAGSGAIYL), 171-191 (EIYKIFAGLVFIYLILLIVAA), 249-269 (SGNDISLAYFIILILIFLVLY), 297-317 (VGKFWGVVGAIIGGLVGGFIM), 325-345 (SIFLFGIIHALGHILFIFLEI), 352-372 (LLFITIGIESITGGMTMTAYI), 390-410 (FLSSMMGISRSIFPIISGYMV), and 413-433 (FGWQNFFLFTTIITIPSLLIL).

Belongs to the major facilitator superfamily.

It localises to the cell inner membrane. This is Putative transporter AmpG 1 (ampG1) from Rickettsia felis (strain ATCC VR-1525 / URRWXCal2) (Rickettsia azadi).